Here is a 257-residue protein sequence, read N- to C-terminus: Small ribosomal subunit protein uS2 (257 aa).

The interval 229-257 (QFTPATTSSQEVDKASEQVEIAADDIDEE) is disordered.

It belongs to the universal ribosomal protein uS2 family.

The chain is Small ribosomal subunit protein uS2 from Caldicellulosiruptor bescii (strain ATCC BAA-1888 / DSM 6725 / KCTC 15123 / Z-1320) (Anaerocellum thermophilum).